Consider the following 442-residue polypeptide: Membrane sensor protein UhpC (442 aa).

Topologically, residues 1–30 (MLSFLKAPANAPLITDKHEVDARYRYWRRH) are cytoplasmic. Residues 31-51 (ILITIWLGYALFYFTRKSFNA) traverse the membrane as a helical segment. The Periplasmic portion of the chain corresponds to 52–66 (AAPEILASGILTRSD). A helical transmembrane segment spans residues 67-87 (IGLLATLFYITYGVSKFVSGI). Over 88 to 95 (VSDRSNAR) the chain is Cytoplasmic. The chain crosses the membrane as a helical span at residues 96-118 (YFMGIGLIATGVVNILFGFSTSL). The Periplasmic segment spans residues 119–121 (WAF). Residues 122–144 (ALLWALNAFFQGFGSPVCARLLT) traverse the membrane as a helical segment. Over 145–162 (AWYSRTERGGWWALWNTA) the chain is Cytoplasmic. The chain crosses the membrane as a helical span at residues 163 to 183 (HNVGGALIPLVMAAVALHYGW). Position 184 (Arg184) is a topological domain, periplasmic. Residues 185–205 (VGMMVAGLLAIGVGMVLCWRL) traverse the membrane as a helical segment. The Cytoplasmic portion of the chain corresponds to 206-244 (RDRPQAIGLPPVGDWRHDALEVAQQQEGAGLSRKEILAK). A helical membrane pass occupies residues 245–265 (YVLLNPYIWLLSLCYVLVYVV). At 266-289 (RAAINDWGNLYMSETLGVDLVTAN) the chain is on the periplasmic side. A helical membrane pass occupies residues 290-310 (TAVSMFELGGFIGALVAGWGS). Over 311-322 (DKLFNGNRGPMN) the chain is Cytoplasmic. A helical membrane pass occupies residues 323–343 (LIFAAGILLSVGSLWLMPFAS). Residues 344 to 347 (YVMQ) lie on the Periplasmic side of the membrane. A helical transmembrane segment spans residues 348-368 (AACFFTTGFFVFGPQMLIGMA). At 369-379 (AAECSHKEAAG) the chain is on the cytoplasmic side. The chain crosses the membrane as a helical span at residues 380–400 (AATGFVGLFAYLGASLSGWPL). Over 401 to 410 (AKVLEIWHWT) the chain is Periplasmic. The chain crosses the membrane as a helical span at residues 411–431 (GFFAVIAIAAGISALLLLPFL). At 432 to 442 (NAQAPRETHEA) the chain is on the cytoplasmic side.

It belongs to the major facilitator superfamily. Organophosphate:Pi antiporter (OPA) (TC 2.A.1.4) family.

It is found in the cell inner membrane. Its function is as follows. Part of the UhpABC signaling cascade that controls the expression of the hexose phosphate transporter UhpT. UhpC senses external glucose-6-phosphate and interacts with the histidine kinase UhpB, leading to the stimulation of the autokinase activity of UhpB. This Salmonella typhimurium (strain LT2 / SGSC1412 / ATCC 700720) protein is Membrane sensor protein UhpC (uhpC).